A 146-amino-acid chain; its full sequence is Hemoglobin subunit beta (146 aa).

N-acetylvaline is present on Val1. In terms of domain architecture, Globin spans 2–146 (HLTAEEKSLV…VANALAHKYH (145 aa)). Thr12 is subject to Phosphothreonine. Ser44 carries the phosphoserine modification. Lys59 carries the N6-acetyllysine modification. His63 contacts heme b. An N6-acetyllysine modification is found at Lys82. Residue His92 participates in heme b binding. The residue at position 93 (Cys93) is an S-nitrosocysteine. An N6-acetyllysine modification is found at Lys144.

It belongs to the globin family. As to quaternary structure, heterotetramer of two alpha chains and two beta chains. As to expression, red blood cells.

Its function is as follows. Involved in oxygen transport from the lung to the various peripheral tissues. The chain is Hemoglobin subunit beta (HBB) from Vulpes vulpes (Red fox).